Reading from the N-terminus, the 111-residue chain is Protein 0.6B (111 aa).

The disordered stretch occupies residues 82–111; it reads LERRKDKRGRRGIDERKRLKPRNSPHLNRH. Positions 99 to 111 are enriched in basic residues; sequence RLKPRNSPHLNRH.

The chain is Protein 0.6B (0.6A) from Escherichia coli (Bacteriophage T7).